The following is a 290-amino-acid chain: BEL1-like homeodomain protein 11 (290 aa).

An SR/KY domain region spans residues 20-36 (SRYAKAVQCLVEEVIDI). Residues 81–152 (ENHEIHIKIT…SLEEAIISQL (72 aa)) are BELL domain. The segment at residues 202–264 (AWKPIRGLPE…NARVRLWKPM (63 aa)) is a DNA-binding region (homeobox).

Belongs to the TALE/BELL homeobox family. In terms of assembly, may form heterodimeric complexes with TALE/KNOX proteins.

It is found in the nucleus. This chain is BEL1-like homeodomain protein 11 (BLH11), found in Arabidopsis thaliana (Mouse-ear cress).